Reading from the N-terminus, the 853-residue chain is Bromodomain-containing protein bet-1 (853 aa).

Polar residues predominate over residues 1–19; sequence MSEGSGDQSQQRPWASPRQ. 2 disordered regions span residues 1–22 and 141–245; these read MSEGSGDQSQQRPWASPRQQPI and SLEQ…LRAK. A Bromo 1 domain is found at 39 to 145; the sequence is RHTNKLDYIM…EVIKKSLEQA (107 aa). Residues 141 to 153 are compositionally biased toward basic and acidic residues; the sequence is SLEQAPREEHDMD. 2 stretches are compositionally biased toward low complexity: residues 166 to 175 and 192 to 215; these read SDGGSKSSSS and SEVSSVTTASAAAPTVSESASVAA. Residue K252 forms a Glycyl lysine isopeptide (Lys-Gly) (interchain with G-Cter in SUMO) linkage. The region spanning 257–366 is the Bromo 2 domain; the sequence is QPLLPSMKPC…EVFDRRWAEL (110 aa). A compositionally biased stretch (low complexity) spans 369 to 381; the sequence is SSSRASSVAPQSA. Residues 369–418 form a disordered region; the sequence is SSSRASSVAPQSAPIAPTPKVAKSSAPKEPKESRKEHKKETTFEASGAKS. Basic and acidic residues predominate over residues 394-410; sequence APKEPKESRKEHKKETT. A coiled-coil region spans residues 419–458; that stretch reads EDLMQINNALSMIREREEKLKAELAAAQAIKDKLTSVKNR. Positions 516-601 constitute an NET domain; sequence DSDDEDNKMA…TIPTLNGNGD (86 aa). 2 disordered regions span residues 594-814 and 819-838; these read PTLN…DEQT and MRMEAKRARQKEDEGSVSLS. The segment covering 612-624 has biased composition (low complexity); the sequence is TSSGATGSKGSSS. Polar residues predominate over residues 684 to 696; it reads QPPSTSREWNQSS. The span at 708–736 shows a compositional bias: low complexity; that stretch reads QPPMSRVPASSSTSVSAIGKNNAAASSNS. A compositionally biased stretch (polar residues) spans 786 to 807; sequence QFFQSQPTTSATIRSPTESQPG. Residues 819–832 show a composition bias toward basic and acidic residues; it reads MRMEAKRARQKEDE.

Belongs to the BET family. As to quaternary structure, interacts with acetylated histone H4. Interacts (via BROMO domain 2) with smo-1 and ubc-9. In terms of tissue distribution, expressed in T-cells, Q-cells, V5-cells and their descendants such as somatic gonad and syncytium.

It localises to the nucleus. It is found in the chromosome. In terms of biological role, required for the establishment and maintenance of stable cell fate in several lineages including V5.pa, T, Z1/Z4 and QR lineages probably by repressing the expression of cell fate determinants. Required to maintain non-distal tip cell (DTC) fate of somatic gonadal cells through the htz-1-mediated repression of transcription factor ceh-22. Regulates the subnuclear localization of histone variant htz-1 in somatic gonadal cells. Plays a role in the attenuation of the let-60/ras pathway, probably by preventing expression of activators of the pathway. Involved in adult locomotion. Acts together with the sumoylation pathway to prevent muscle myosin depletion in aging adults probably by preventing myoblast growth factor receptor egl-15 overexpression. May play a role in vulva development. This Caenorhabditis elegans protein is Bromodomain-containing protein bet-1.